The sequence spans 193 residues: ATP synthase subunit b 2 (193 aa).

The chain crosses the membrane as a helical span at residues Ile-44 to Pro-64.

It belongs to the ATPase B chain family. In terms of assembly, F-type ATPases have 2 components, F(1) - the catalytic core - and F(0) - the membrane proton channel. F(1) has five subunits: alpha(3), beta(3), gamma(1), delta(1), epsilon(1). F(0) has three main subunits: a(1), b(2) and c(10-14). The alpha and beta chains form an alternating ring which encloses part of the gamma chain. F(1) is attached to F(0) by a central stalk formed by the gamma and epsilon chains, while a peripheral stalk is formed by the delta and b chains.

It is found in the cell inner membrane. F(1)F(0) ATP synthase produces ATP from ADP in the presence of a proton or sodium gradient. F-type ATPases consist of two structural domains, F(1) containing the extramembraneous catalytic core and F(0) containing the membrane proton channel, linked together by a central stalk and a peripheral stalk. During catalysis, ATP synthesis in the catalytic domain of F(1) is coupled via a rotary mechanism of the central stalk subunits to proton translocation. Functionally, component of the F(0) channel, it forms part of the peripheral stalk, linking F(1) to F(0). The b'-subunit is a diverged and duplicated form of b found in plants and photosynthetic bacteria. This is ATP synthase subunit b 2 (atpF2) from Jannaschia sp. (strain CCS1).